Reading from the N-terminus, the 264-residue chain is Phosphonoacetaldehyde hydrolase (264 aa).

The active-site Nucleophile is the Asp10. The Mg(2+) site is built by Asp10 and Ala12. The Schiff-base intermediate with substrate role is filled by Lys52. Asp185 is a binding site for Mg(2+).

This sequence belongs to the HAD-like hydrolase superfamily. PhnX family. In terms of assembly, homodimer. Mg(2+) is required as a cofactor.

It catalyses the reaction phosphonoacetaldehyde + H2O = acetaldehyde + phosphate + H(+). Involved in phosphonate degradation. This chain is Phosphonoacetaldehyde hydrolase, found in Parabacteroides distasonis (strain ATCC 8503 / DSM 20701 / CIP 104284 / JCM 5825 / NCTC 11152).